The sequence spans 620 residues: Phosphopentomutase (620 aa).

Alpha-D-glucose 1,6-bisphosphate contacts are provided by Arg71 and Ser173. The Phosphoserine intermediate role is filled by Ser173. Mg(2+) is bound by residues Ser173, Asp330, Asp332, and Asp334. Ser173 carries the post-translational modification Phosphoserine. Residues Asp334, Arg335, Thr408, Glu432, and Lys446 each coordinate alpha-D-glucose 1,6-bisphosphate.

Belongs to the phosphohexose mutase family. As to quaternary structure, monomer. It depends on Mg(2+) as a cofactor. In terms of tissue distribution, highly expressed in lung, spleen and thymus. Expressed at lower levels in liver, brain, kidney, skeletal muscle, testis and heart.

The protein localises to the cytoplasm. It localises to the cytosol. It carries out the reaction alpha-D-ribose 1-phosphate = D-ribose 5-phosphate. The catalysed reaction is 2-deoxy-alpha-D-ribose 1-phosphate = 2-deoxy-D-ribose 5-phosphate. The enzyme catalyses alpha-D-glucose 1-phosphate = alpha-D-glucose 6-phosphate. It catalyses the reaction O-phospho-L-seryl-[protein] + alpha-D-glucose 1-phosphate = alpha-D-glucose 1,6-bisphosphate + L-seryl-[protein]. It carries out the reaction alpha-D-glucose 1,6-bisphosphate + L-seryl-[protein] = O-phospho-L-seryl-[protein] + alpha-D-glucose 6-phosphate. Its function is as follows. Catalyzes the conversion of the nucleoside breakdown products ribose-1-phosphate and deoxyribose-1-phosphate to the corresponding 5-phosphopentoses. Catalyzes the reversible isomerization of alpha-D-glucose 1-phosphate to alpha-D-glucose 6-phosphate but with a lower catalytic efficiency. The mechanism proceeds via the intermediate compound alpha-D-glucose 1,6-bisphosphate. In vitro, also has a low glucose 1,6-bisphosphate synthase activity which is most probably not physiologically relevant. In Mus musculus (Mouse), this protein is Phosphopentomutase.